The sequence spans 149 residues: Transcriptional repressor NrdR (149 aa).

A zinc finger lies at 3-34 (CPFCSTEETKVIDSRLVSEGYQVRRRRECGNC). The 91-residue stretch at 49-139 (PKVIKNDGTR…VYLSFDDINQ (91 aa)) folds into the ATP-cone domain.

It belongs to the NrdR family. Zn(2+) serves as cofactor.

Its function is as follows. Negatively regulates transcription of bacterial ribonucleotide reductase nrd genes and operons by binding to NrdR-boxes. The sequence is that of Transcriptional repressor NrdR from Pasteurella multocida (strain Pm70).